The sequence spans 621 residues: Intermediate filament protein ifc-2 (621 aa).

The head stretch occupies residues serine 20–glutamate 55. In terms of domain architecture, IF rod spans glutamate 52–threonine 400. Positions isoleucine 56–leucine 87 are coil 1A. The tract at residues arginine 88 to leucine 100 is linker 1. The segment at tyrosine 101–glutamate 238 is coil 1B. Residues leucine 239–histidine 256 form a linker 12 region. Positions glutamate 257–threonine 400 are coil 2. Positions tyrosine 401–glutamate 549 are tail. The LTD domain maps to serine 508 to asparagine 621.

The protein belongs to the intermediate filament family.

Its subcellular location is the cytoplasm. Its function is as follows. Cytoplasmic intermediate filaments provide mechanical strength to cells. The sequence is that of Intermediate filament protein ifc-2 from Caenorhabditis briggsae.